Reading from the N-terminus, the 380-residue chain is Chaperone protein DnaJ (380 aa).

The J domain occupies 5–69 (DYYEILGVSK…QKRAHYDQFG (65 aa)). A CR-type zinc finger spans residues 135-217 (GKETDIEIPR…CGGTGRVKKR (83 aa)). Residues cysteine 148, cysteine 151, cysteine 165, cysteine 168, cysteine 191, cysteine 194, cysteine 205, and cysteine 208 each coordinate Zn(2+). CXXCXGXG motif repeat units lie at residues 148–155 (CDTCHGTG), 165–172 (CSYCHGTG), 191–198 (CPYCGGTG), and 205–212 (CTTCGGTG).

The protein belongs to the DnaJ family. As to quaternary structure, homodimer. Zn(2+) is required as a cofactor.

Its subcellular location is the cytoplasm. In terms of biological role, participates actively in the response to hyperosmotic and heat shock by preventing the aggregation of stress-denatured proteins and by disaggregating proteins, also in an autonomous, DnaK-independent fashion. Unfolded proteins bind initially to DnaJ; upon interaction with the DnaJ-bound protein, DnaK hydrolyzes its bound ATP, resulting in the formation of a stable complex. GrpE releases ADP from DnaK; ATP binding to DnaK triggers the release of the substrate protein, thus completing the reaction cycle. Several rounds of ATP-dependent interactions between DnaJ, DnaK and GrpE are required for fully efficient folding. Also involved, together with DnaK and GrpE, in the DNA replication of plasmids through activation of initiation proteins. This chain is Chaperone protein DnaJ, found in Geobacillus sp. (strain WCH70).